Reading from the N-terminus, the 136-residue chain is NHL-repeat-containing protein 4 (136 aa).

NHL repeat units lie at residues 48–91 and 93–132; these read QPLG…FPRV and PPIC…YQYL.

In Mus musculus (Mouse), this protein is NHL-repeat-containing protein 4 (Nhlrc4).